Here is a 351-residue protein sequence, read N- to C-terminus: Nicotinate-nucleotide--dimethylbenzimidazole phosphoribosyltransferase (351 aa).

Glu315 (proton acceptor) is an active-site residue.

It belongs to the CobT family.

The enzyme catalyses 5,6-dimethylbenzimidazole + nicotinate beta-D-ribonucleotide = alpha-ribazole 5'-phosphate + nicotinate + H(+). The protein operates within nucleoside biosynthesis; alpha-ribazole biosynthesis; alpha-ribazole from 5,6-dimethylbenzimidazole: step 1/2. In terms of biological role, catalyzes the synthesis of alpha-ribazole-5'-phosphate from nicotinate mononucleotide (NAMN) and 5,6-dimethylbenzimidazole (DMB). This is Nicotinate-nucleotide--dimethylbenzimidazole phosphoribosyltransferase from Acetivibrio thermocellus (strain ATCC 27405 / DSM 1237 / JCM 9322 / NBRC 103400 / NCIMB 10682 / NRRL B-4536 / VPI 7372) (Clostridium thermocellum).